Here is a 357-residue protein sequence, read N- to C-terminus: DNA replication and repair protein RecF (357 aa).

30–37 (GANGSGKT) contacts ATP.

The protein belongs to the RecF family.

The protein localises to the cytoplasm. In terms of biological role, the RecF protein is involved in DNA metabolism; it is required for DNA replication and normal SOS inducibility. RecF binds preferentially to single-stranded, linear DNA. It also seems to bind ATP. The sequence is that of DNA replication and repair protein RecF from Shigella dysenteriae serotype 1 (strain Sd197).